The chain runs to 317 residues: Beta-ketoacyl-[acyl-carrier-protein] synthase III (317 aa).

Active-site residues include C112 and H244. Residues 245–249 (QANLR) are ACP-binding. Residue N274 is part of the active site.

The protein belongs to the thiolase-like superfamily. FabH family. In terms of assembly, homodimer.

The protein localises to the cytoplasm. The enzyme catalyses malonyl-[ACP] + acetyl-CoA + H(+) = 3-oxobutanoyl-[ACP] + CO2 + CoA. Its pathway is lipid metabolism; fatty acid biosynthesis. In terms of biological role, catalyzes the condensation reaction of fatty acid synthesis by the addition to an acyl acceptor of two carbons from malonyl-ACP. Catalyzes the first condensation reaction which initiates fatty acid synthesis and may therefore play a role in governing the total rate of fatty acid production. Possesses both acetoacetyl-ACP synthase and acetyl transacylase activities. Its substrate specificity determines the biosynthesis of branched-chain and/or straight-chain of fatty acids. In Escherichia coli O9:H4 (strain HS), this protein is Beta-ketoacyl-[acyl-carrier-protein] synthase III.